A 77-amino-acid chain; its full sequence is Omega-conotoxin TxVII (77 aa).

A signal peptide spans 1 to 22 (MKLTCMMIVAVLFLTAWTFATA). A propeptide spanning residues 23 to 49 (DDSGNGLENLFPKAHHEMKNPEASKLN) is cleaved from the precursor. 3 disulfide bridges follow: Cys52–Cys67, Cys59–Cys71, and Cys66–Cys75.

In terms of tissue distribution, expressed by the venom duct.

It is found in the secreted. In terms of biological role, omega-conotoxins act at presynaptic membranes, they bind and block voltage-gated calcium channels (Cav). Specifically acts on L-type channels. It blocks molluscan dihydropyridine-sensitive calcium channels. In Conus textile (Cloth-of-gold cone), this protein is Omega-conotoxin TxVII.